A 543-amino-acid chain; its full sequence is Chaperonin GroEL (543 aa).

ATP is bound by residues 29-32 (TLGP), 86-90 (DGTTT), Gly-413, 477-479 (DAL), and Asp-493.

It belongs to the chaperonin (HSP60) family. Forms a cylinder of 14 subunits composed of two heptameric rings stacked back-to-back. Interacts with the co-chaperonin GroES.

The protein resides in the cytoplasm. The enzyme catalyses ATP + H2O + a folded polypeptide = ADP + phosphate + an unfolded polypeptide.. Its function is as follows. Together with its co-chaperonin GroES, plays an essential role in assisting protein folding. The GroEL-GroES system forms a nano-cage that allows encapsulation of the non-native substrate proteins and provides a physical environment optimized to promote and accelerate protein folding. This Clostridium botulinum protein is Chaperonin GroEL.